The sequence spans 358 residues: Protein-glutamate methylesterase/protein-glutamine glutaminase 2 (358 aa).

One can recognise a Response regulatory domain in the interval 7-124 (SVLLVDDSAV…KNFLIESAAE (118 aa)). The residue at position 58 (D58) is a 4-aspartylphosphate. Residues 170–358 (AQTTERIVAI…QEIHQAILHR (189 aa)) enclose the CheB-type methylesterase domain. Active-site residues include S182, H208, and D304.

The protein belongs to the CheB family. Phosphorylated by CheA. Phosphorylation of the N-terminal regulatory domain activates the methylesterase activity.

The protein localises to the cytoplasm. The catalysed reaction is [protein]-L-glutamate 5-O-methyl ester + H2O = L-glutamyl-[protein] + methanol + H(+). It carries out the reaction L-glutaminyl-[protein] + H2O = L-glutamyl-[protein] + NH4(+). In terms of biological role, involved in chemotaxis. Part of a chemotaxis signal transduction system that modulates chemotaxis in response to various stimuli. Catalyzes the demethylation of specific methylglutamate residues introduced into the chemoreceptors (methyl-accepting chemotaxis proteins or MCP) by CheR. Also mediates the irreversible deamidation of specific glutamine residues to glutamic acid. The polypeptide is Protein-glutamate methylesterase/protein-glutamine glutaminase 2 (Pseudomonas syringae pv. tomato (strain ATCC BAA-871 / DC3000)).